A 60-amino-acid chain; its full sequence is Large ribosomal subunit protein bL32 (60 aa).

Belongs to the bacterial ribosomal protein bL32 family.

The sequence is that of Large ribosomal subunit protein bL32 from Streptococcus pneumoniae serotype 4 (strain ATCC BAA-334 / TIGR4).